The chain runs to 225 residues: NAD(P)H-quinone oxidoreductase subunit K, chloroplastic (225 aa).

Residues cysteine 43, cysteine 44, cysteine 108, and cysteine 139 each contribute to the [4Fe-4S] cluster site.

The protein belongs to the complex I 20 kDa subunit family. As to quaternary structure, NDH is composed of at least 16 different subunits, 5 of which are encoded in the nucleus. Requires [4Fe-4S] cluster as cofactor.

The protein resides in the plastid. It is found in the chloroplast thylakoid membrane. It catalyses the reaction a plastoquinone + NADH + (n+1) H(+)(in) = a plastoquinol + NAD(+) + n H(+)(out). The catalysed reaction is a plastoquinone + NADPH + (n+1) H(+)(in) = a plastoquinol + NADP(+) + n H(+)(out). In terms of biological role, NDH shuttles electrons from NAD(P)H:plastoquinone, via FMN and iron-sulfur (Fe-S) centers, to quinones in the photosynthetic chain and possibly in a chloroplast respiratory chain. The immediate electron acceptor for the enzyme in this species is believed to be plastoquinone. Couples the redox reaction to proton translocation, and thus conserves the redox energy in a proton gradient. In Oryza nivara (Indian wild rice), this protein is NAD(P)H-quinone oxidoreductase subunit K, chloroplastic.